A 287-amino-acid polypeptide reads, in one-letter code: MSNTKEIRSQIICIQNTKKITKAMEMVAVSKMRKTQERMLASLPYAEIIHKVIKHLTLGNLEYKHPYFHERKVKKIGYIVISTDRGLAGSLNINLFKQLLANMKKWNEQGITIELALVGCKAVNFFNLIGSKVIAQVTGITDDPKLSKLIGIIKVMLQAYDNEYLDKLYLVSNKFVNVISQIPQICQILPIPIEDKIDLKMKHWDYIYEPDSKLLLNILLQRYIESQVYQSVVENLASEQAARMVAMKAATENADTLMKELKIVYNKARQNSITQEINEIVAGASAV.

It belongs to the ATPase gamma chain family. F-type ATPases have 2 components, CF(1) - the catalytic core - and CF(0) - the membrane proton channel. CF(1) has five subunits: alpha(3), beta(3), gamma(1), delta(1), epsilon(1). CF(0) has three main subunits: a, b and c.

It is found in the cell inner membrane. Functionally, produces ATP from ADP in the presence of a proton gradient across the membrane. The gamma chain is believed to be important in regulating ATPase activity and the flow of protons through the CF(0) complex. This chain is ATP synthase gamma chain, found in Baumannia cicadellinicola subsp. Homalodisca coagulata.